We begin with the raw amino-acid sequence, 466 residues long: Methylenetetrahydrofolate--tRNA-(uracil-5-)-methyltransferase TrmFO (466 aa).

Residue G10–G15 participates in FAD binding.

The protein belongs to the MnmG family. TrmFO subfamily. It depends on FAD as a cofactor.

The protein resides in the cytoplasm. The enzyme catalyses uridine(54) in tRNA + (6R)-5,10-methylene-5,6,7,8-tetrahydrofolate + NADH + H(+) = 5-methyluridine(54) in tRNA + (6S)-5,6,7,8-tetrahydrofolate + NAD(+). The catalysed reaction is uridine(54) in tRNA + (6R)-5,10-methylene-5,6,7,8-tetrahydrofolate + NADPH + H(+) = 5-methyluridine(54) in tRNA + (6S)-5,6,7,8-tetrahydrofolate + NADP(+). Its function is as follows. Catalyzes the folate-dependent formation of 5-methyl-uridine at position 54 (M-5-U54) in all tRNAs. The polypeptide is Methylenetetrahydrofolate--tRNA-(uracil-5-)-methyltransferase TrmFO (Phenylobacterium zucineum (strain HLK1)).